Here is a 481-residue protein sequence, read N- to C-terminus: Bifunctional protein HldE (481 aa).

Residues 1–318 (MKVTLPDFRR…ENAIRGRAET (318 aa)) are ribokinase. Residue 195-198 (NLSE) coordinates ATP. Residue aspartate 264 is part of the active site. A cytidylyltransferase region spans residues 344 to 481 (MTNGIFDILH…KRRAGQRTVV (138 aa)).

In the N-terminal section; belongs to the carbohydrate kinase PfkB family. It in the C-terminal section; belongs to the cytidylyltransferase family. Homodimer.

It catalyses the reaction D-glycero-beta-D-manno-heptose 7-phosphate + ATP = D-glycero-beta-D-manno-heptose 1,7-bisphosphate + ADP + H(+). It carries out the reaction D-glycero-beta-D-manno-heptose 1-phosphate + ATP + H(+) = ADP-D-glycero-beta-D-manno-heptose + diphosphate. It participates in nucleotide-sugar biosynthesis; ADP-L-glycero-beta-D-manno-heptose biosynthesis; ADP-L-glycero-beta-D-manno-heptose from D-glycero-beta-D-manno-heptose 7-phosphate: step 1/4. Its pathway is nucleotide-sugar biosynthesis; ADP-L-glycero-beta-D-manno-heptose biosynthesis; ADP-L-glycero-beta-D-manno-heptose from D-glycero-beta-D-manno-heptose 7-phosphate: step 3/4. Functionally, catalyzes the phosphorylation of D-glycero-D-manno-heptose 7-phosphate at the C-1 position to selectively form D-glycero-beta-D-manno-heptose-1,7-bisphosphate. Its function is as follows. Catalyzes the ADP transfer from ATP to D-glycero-beta-D-manno-heptose 1-phosphate, yielding ADP-D-glycero-beta-D-manno-heptose. The protein is Bifunctional protein HldE of Sodalis glossinidius (strain morsitans).